A 721-amino-acid polypeptide reads, in one-letter code: BBSome complex member BBS2 (721 aa).

The stretch at 325–369 forms a coiled coil; sequence KGNLLDTSVEQDLIRELSQKKQNLLLELRNYEESTKAELSSPLNE.

Part of BBSome complex, that contains BBS1, BBS2, BBS4, BBS5, BBS7, BBS8/TTC8, BBS9 and BBIP10. Interacts (via C-terminus) with BBS7. Interacts (via coiled coil domain) with MKKS. Interacts with CCDC28B. Interacts with DLEC1.

It localises to the cell projection. The protein localises to the cilium membrane. The protein resides in the cytoplasm. Its subcellular location is the cytoskeleton. It is found in the microtubule organizing center. It localises to the centrosome. The protein localises to the centriolar satellite. In terms of biological role, the BBSome complex is thought to function as a coat complex required for sorting of specific membrane proteins to the primary cilia. The BBSome complex is required for ciliogenesis but is dispensable for centriolar satellite function. This ciliogenic function is mediated in part by the Rab8 GDP/GTP exchange factor, which localizes to the basal body and contacts the BBSome. Rab8(GTP) enters the primary cilium and promotes extension of the ciliary membrane. Firstly the BBSome associates with the ciliary membrane and binds to RAB3IP/Rabin8, the guanosyl exchange factor (GEF) for Rab8 and then the Rab8-GTP localizes to the cilium and promotes docking and fusion of carrier vesicles to the base of the ciliary membrane. The BBSome complex, together with the LTZL1, controls SMO ciliary trafficking and contributes to the sonic hedgehog (SHH) pathway regulation. Required for proper BBSome complex assembly and its ciliary localization. The protein is BBSome complex member BBS2 (Bbs2) of Mus musculus (Mouse).